The sequence spans 637 residues: Probable potassium transport system protein Kup (637 aa).

12 consecutive transmembrane segments (helical) span residues 24-44, 64-84, 113-133, 151-171, 182-202, 225-245, 261-281, 290-310, 351-371, 381-401, 409-429, and 433-453; these read LAIA…LYAL, VISL…LLFV, AGAL…DAVI, PHLS…LFWI, LFGP…VYHI, LLQA…AEAL, AYGL…ALLI, PFFL…STVA, IYVP…VIGF, YGIA…VVMV, LLVG…FGAN, and VAQG…LLMT.

It belongs to the HAK/KUP transporter (TC 2.A.72) family.

The protein localises to the cell inner membrane. It catalyses the reaction K(+)(in) + H(+)(in) = K(+)(out) + H(+)(out). Transport of potassium into the cell. Likely operates as a K(+):H(+) symporter. This is Probable potassium transport system protein Kup from Burkholderia ambifaria (strain MC40-6).